The primary structure comprises 292 residues: uncharacterized protein (292 aa).

This is an uncharacterized protein from Acanthamoeba polyphaga (Amoeba).